Reading from the N-terminus, the 213-residue chain is Protein big brother (213 aa).

The protein belongs to the CBF-beta family.

It localises to the nucleus. Functionally, regulates the DNA-binding properties of Runt. This Drosophila melanogaster (Fruit fly) protein is Protein big brother (Bgb).